A 309-amino-acid polypeptide reads, in one-letter code: Biotin synthase (309 aa).

The Radical SAM core domain occupies 35-259; that stretch reads NKIQISSLLS…MIPKSYIRLS (225 aa). Positions 50, 54, and 57 each coordinate [4Fe-4S] cluster. [2Fe-2S] cluster is bound by residues Cys94, Cys125, Cys185, and Arg257.

The protein belongs to the radical SAM superfamily. Biotin synthase family. In terms of assembly, homodimer. Requires [4Fe-4S] cluster as cofactor. [2Fe-2S] cluster is required as a cofactor.

The catalysed reaction is (4R,5S)-dethiobiotin + (sulfur carrier)-SH + 2 reduced [2Fe-2S]-[ferredoxin] + 2 S-adenosyl-L-methionine = (sulfur carrier)-H + biotin + 2 5'-deoxyadenosine + 2 L-methionine + 2 oxidized [2Fe-2S]-[ferredoxin]. It functions in the pathway cofactor biosynthesis; biotin biosynthesis; biotin from 7,8-diaminononanoate: step 2/2. Catalyzes the conversion of dethiobiotin (DTB) to biotin by the insertion of a sulfur atom into dethiobiotin via a radical-based mechanism. The protein is Biotin synthase of Rickettsia felis (strain ATCC VR-1525 / URRWXCal2) (Rickettsia azadi).